We begin with the raw amino-acid sequence, 1453 residues long: Collagen alpha-1(I) chain (1453 aa).

The signal sequence occupies residues 1 to 22 (MFSFVDSRLLLLIAATVLLTRG). The propeptide at 23–151 (EGEEDIQTGS…PPGLGGNFAP (129 aa)) is N-terminal propeptide. Residues 31 to 89 (GSCVQDGLTYNDKDVWKPEPCQICVCDSGNILCDEVICEDTSDCPNAEIPFGECCPICP) enclose the VWFC domain. The segment at 98–1203 (PESAGVEGPK…PQEKAHDGGR (1106 aa)) is disordered. Basic and acidic residues predominate over residues 106–116 (PKGDTGPRGDR). Residues 131 to 143 (PGLPGPPGPPGPP) show a composition bias toward pro residues. Q152 bears the Pyrrolidone carboxylic acid mark. K160 carries the post-translational modification Allysine. Positions 162 to 176 (AGVAVPGPMGPAGPR) are enriched in low complexity. Residues P179, P182, P185, P194, P197, P200, P215, P230, P236, P245, and P251 each carry the 4-hydroxyproline modification. Residues 187–206 (PQGFQGPPGEPGEPGASGPM) are compositionally biased toward low complexity. K254 is modified (5-hydroxylysine; alternate). K254 carries O-linked (Gal...) hydroxylysine; partial glycosylation. Low complexity predominate over residues 265-284 (AKGQPGPAGPKGEPGSPGEN). Residues P269, P278, P281, P287, P296, P302, P317, P323, P332, and P335 each carry the 4-hydroxyproline modification. Low complexity predominate over residues 307–319 (PAGARGNDGAPGA). Pro residues predominate over residues 320-334 (AGPPGPTGPAGPPGF). The span at 350–361 (RGSEGPQGSRGE) shows a compositional bias: low complexity. A 4-hydroxyproline mark is found at P362, P365, P377, P383, P392, P398, P401, and P416. Over residues 368-418 (AGAAGPAGNPGADGQPGAKGATGAPGIAGAPGFPGARGPSGPQGPSGAPGP) the composition is skewed to low complexity. A 5-hydroxylysine modification is found at K419. 4-hydroxyproline is present on residues P425, P428, P440, P449, P464, P470, P479, and P485. Low complexity predominate over residues 463-482 (EPGPAGLPGPAGERGAPGSR). K494 carries the 5-hydroxylysine modification. Residues P497, P503, P512, P518, P524, P533, P536, P545, P554, P560, P572, P581, P584, P590, P593, P611, P629, P635, P641, P647, P653, P659, P671, P680, P692, P704, P707, P713, P719, P728, and P737 each carry the 4-hydroxyproline modification. Residues 527–581 (KGLTGSPGSPGPDGKTGPPGPAGQDGRPGPAGPPGARGQAGVMGFPGPKGAAGEP) are compositionally biased toward low complexity. Over residues 623-664 (QGPAGAPGFQGLPGPAGPPGEAGKPGEQGVPGNAGAPGPAGA) the composition is skewed to low complexity. Over residues 685–722 (PRGANGAPGNDGAKGDAGAPGAPGNEGPPGLEGMPGER) the composition is skewed to low complexity. 5-hydroxylysine is present on K740. A 4-hydroxyproline mark is found at P746, P761, P767, P776, P788, P794, P797, P806, P812, P830, P839, and P848. The span at 800–827 (AGFAGPPGADGQPGAKGETGDAGAKGDA) shows a compositional bias: low complexity. A compositionally biased stretch (low complexity) spans 835-883 (PTGAPGPAGZVGAPGPKGARGSAGPPGATGFPGAAGRVGPPGPSGNIGL). A 5-hydroxylysine modification is found at K851. 4-hydroxyproline occurs at positions 860 and 866. The residue at position 874 (P874) is a 3-hydroxyproline. 4-hydroxyproline is present on residues P875, P884, P887, P908, P911, P917, P920, P926, P935, P953, P962, P965, P971, P986, P992, P998, P1007, and P1013. Residues 890–908 (AGKZGSKGPRGETGPAGRP) are compositionally biased toward low complexity. Positions 910–920 (EPGPAGPPGPP) are enriched in pro residues. Residues 985–995 (PPGPMGPPGLA) are compositionally biased toward pro residues. Residues 997 to 1021 (PPGEAGREGAPGAEGAPGRDGAAGP) show a composition bias toward low complexity. A 5-hydroxylysine; partial modification is found at K1022. Positions 1031–1046 (AGPPGAPGAPGAPGPV) are enriched in pro residues. 4-hydroxyproline is present on residues P1034, P1037, P1040, and P1067. Positions 1070-1081 (AGARGPAGPQGP) are enriched in low complexity. Residues 1082-1096 (RGDKGETGEQGDRGM) show a composition bias toward basic and acidic residues. A 5-hydroxylysine; partial modification is found at K1085. K1097 bears the 5-hydroxylysine; alternate mark. O-linked (Gal...) hydroxylysine; partial glycosylation is present at K1097. 5 positions are modified to 4-hydroxyproline: P1109, P1112, P1115, P1133, and P1148. Residues 1115 to 1139 (PGEQGPSGASGPAGPRGPPGSAGAA) are compositionally biased toward low complexity. P1153 is subject to 3-hydroxyproline. At P1154 the chain carries 4-hydroxyproline. Residues 1166–1181 (VGPPGPPGPPGPPGPP) show a composition bias toward pro residues. The residue at position 1168 (P1168) is a 3-hydroxyproline. Position 1169 is a 4-hydroxyproline (P1169). P1171 carries the post-translational modification 3-hydroxyproline. A 4-hydroxyproline modification is found at P1172. P1174 carries the post-translational modification 3-hydroxyproline. 4-hydroxyproline is present on residues P1175, P1178, and P1181. Allysine is present on K1197. Positions 1208–1453 (DDANVMRDRD…GIDIGPVCFL (246 aa)) are cleaved as a propeptide — C-terminal propeptide. The region spanning 1218–1453 (LEVDTTLKSL…GIDIGPVCFL (236 aa)) is the Fibrillar collagen NC1 domain. 3 cysteine pairs are disulfide-bonded: C1248–C1280, C1288–C1451, and C1359–C1404. 5 residues coordinate Ca(2+): D1266, N1268, Q1269, C1271, and D1274. N1354 carries an N-linked (GlcNAc...) asparagine glycan.

Belongs to the fibrillar collagen family. In terms of assembly, trimers of one alpha 2(I) and two alpha 1(I) chains. Post-translationally, contains mostly 4-hydroxyproline. Proline residues at the third position of the tripeptide repeating unit (G-X-Y) are 4-hydroxylated in some or all of the chains. In terms of processing, contains 3-hydroxyproline. This modification occurs on the first proline residue in the sequence motif Gly-Pro-Hyp, where Hyp is 4-hydroxyproline. Lysine residues at the third position of the tripeptide repeating unit (G-X-Y) are 5-hydroxylated in some or all of the chains. Post-translationally, O-glycosylated on hydroxylated lysine residues. The O-linked glycan consists of a Glc-Gal disaccharide. Forms the fibrils of tendon, ligaments and bones. In bones the fibrils are mineralized with calcium hydroxyapatite.

The protein resides in the secreted. The protein localises to the extracellular space. It is found in the extracellular matrix. Type I collagen is a member of group I collagen (fibrillar forming collagen). The protein is Collagen alpha-1(I) chain (COL1A1) of Gallus gallus (Chicken).